A 103-amino-acid polypeptide reads, in one-letter code: UPF0298 protein LACR_0404 (103 aa).

Belongs to the UPF0298 family.

The protein localises to the cytoplasm. This Lactococcus lactis subsp. cremoris (strain SK11) protein is UPF0298 protein LACR_0404.